A 128-amino-acid polypeptide reads, in one-letter code: Fluoride-specific ion channel FluC (128 aa).

Transmembrane regions (helical) follow at residues 2 to 22 (FYSI…RWCL), 35 to 55 (LGTL…AVVF), 67 to 87 (LFVI…SVEV), and 96 to 116 (FGWA…LTAL). Na(+)-binding residues include Gly-75 and Thr-78.

Belongs to the fluoride channel Fluc/FEX (TC 1.A.43) family.

It localises to the cell inner membrane. The catalysed reaction is fluoride(in) = fluoride(out). With respect to regulation, na(+) is not transported, but it plays an essential structural role and its presence is essential for fluoride channel function. Fluoride-specific ion channel. Important for reducing fluoride concentration in the cell, thus reducing its toxicity. In Burkholderia cenocepacia (strain ATCC BAA-245 / DSM 16553 / LMG 16656 / NCTC 13227 / J2315 / CF5610) (Burkholderia cepacia (strain J2315)), this protein is Fluoride-specific ion channel FluC.